The following is a 340-amino-acid chain: HTH-type transcriptional repressor PurR (340 aa).

The 55-residue stretch at 2–56 (ATIKDVAKLVGVSTTTVSHVINKTRFVAEDTTKAVWEAIASLNYSPSAVARSLKV) folds into the HTH lacI-type domain. The H-T-H motif DNA-binding region spans 4–23 (IKDVAKLVGVSTTTVSHVIN). A DNA-binding region spans residues 48–56 (SAVARSLKV). Positions 73, 188, 190, 219, and 273 each coordinate hypoxanthine.

Homodimer.

It functions in the pathway purine metabolism; purine nucleotide biosynthesis [regulation]. Is the main repressor of the genes involved in the de novo synthesis of purine nucleotides, regulating purB, purC, purEK, purF, purHD, purL, purMN and guaBA expression. PurR is allosterically activated to bind its cognate DNA by binding the purine corepressors, hypoxanthine or guanine, thereby effecting transcription repression. The chain is HTH-type transcriptional repressor PurR from Glaesserella parasuis serovar 5 (strain SH0165) (Haemophilus parasuis).